A 159-amino-acid chain; its full sequence is Phosphopantetheine adenylyltransferase (159 aa).

Ser8 serves as a coordination point for substrate. Residues 8–9 (SF) and His16 each bind ATP. 3 residues coordinate substrate: Lys40, Leu72, and Arg86. Residues 87–89 (GLR), Glu97, and 122–128 (YSFISSS) each bind ATP.

This sequence belongs to the bacterial CoaD family. In terms of assembly, homohexamer. Mg(2+) is required as a cofactor.

It is found in the cytoplasm. It catalyses the reaction (R)-4'-phosphopantetheine + ATP + H(+) = 3'-dephospho-CoA + diphosphate. Its pathway is cofactor biosynthesis; coenzyme A biosynthesis; CoA from (R)-pantothenate: step 4/5. Functionally, reversibly transfers an adenylyl group from ATP to 4'-phosphopantetheine, yielding dephospho-CoA (dPCoA) and pyrophosphate. This chain is Phosphopantetheine adenylyltransferase, found in Thermosipho melanesiensis (strain DSM 12029 / CIP 104789 / BI429).